Reading from the N-terminus, the 318-residue chain is tRNA uridine(34) hydroxylase (318 aa).

The 95-residue stretch at 123 to 217 (EDDDTVIIDA…YGKDPETKGE (95 aa)) folds into the Rhodanese domain. The active-site Cysteine persulfide intermediate is cysteine 177.

It belongs to the TrhO family.

The catalysed reaction is uridine(34) in tRNA + AH2 + O2 = 5-hydroxyuridine(34) in tRNA + A + H2O. In terms of biological role, catalyzes oxygen-dependent 5-hydroxyuridine (ho5U) modification at position 34 in tRNAs. This Staphylococcus aureus (strain USA300) protein is tRNA uridine(34) hydroxylase.